Reading from the N-terminus, the 281-residue chain is Nhr-229 coiled coil domain containing nccd-1 (281 aa).

In Caenorhabditis elegans, this protein is Nhr-229 coiled coil domain containing nccd-1.